The following is a 454-amino-acid chain: Bifunctional protein GlmU (454 aa).

Positions 1–230 (MSGRFAVILA…LSETMGVNDR (230 aa)) are pyrophosphorylase. UDP-N-acetyl-alpha-D-glucosamine-binding positions include 9-12 (LAAG), Lys23, Gln73, and 78-79 (GT). Asp103 provides a ligand contact to Mg(2+). The UDP-N-acetyl-alpha-D-glucosamine site is built by Gly140, Glu155, Asn170, and Asn228. Residue Asn228 coordinates Mg(2+). The interval 231–251 (VALSQAEAAMRKRINEEWMRQ) is linker. The tract at residues 252 to 454 (GVTIIDPQTT…NKDNYVKKDV (203 aa)) is N-acetyltransferase. The UDP-N-acetyl-alpha-D-glucosamine site is built by Arg333 and Lys351. His363 functions as the Proton acceptor in the catalytic mechanism. UDP-N-acetyl-alpha-D-glucosamine-binding residues include Tyr366 and Asn377. Acetyl-CoA contacts are provided by residues 386 to 387 (NY), Ser405, Ala423, and Arg440.

In the N-terminal section; belongs to the N-acetylglucosamine-1-phosphate uridyltransferase family. This sequence in the C-terminal section; belongs to the transferase hexapeptide repeat family. As to quaternary structure, homotrimer. Mg(2+) is required as a cofactor.

The protein localises to the cytoplasm. The catalysed reaction is alpha-D-glucosamine 1-phosphate + acetyl-CoA = N-acetyl-alpha-D-glucosamine 1-phosphate + CoA + H(+). The enzyme catalyses N-acetyl-alpha-D-glucosamine 1-phosphate + UTP + H(+) = UDP-N-acetyl-alpha-D-glucosamine + diphosphate. Its pathway is nucleotide-sugar biosynthesis; UDP-N-acetyl-alpha-D-glucosamine biosynthesis; N-acetyl-alpha-D-glucosamine 1-phosphate from alpha-D-glucosamine 6-phosphate (route II): step 2/2. It functions in the pathway nucleotide-sugar biosynthesis; UDP-N-acetyl-alpha-D-glucosamine biosynthesis; UDP-N-acetyl-alpha-D-glucosamine from N-acetyl-alpha-D-glucosamine 1-phosphate: step 1/1. The protein operates within bacterial outer membrane biogenesis; LPS lipid A biosynthesis. In terms of biological role, catalyzes the last two sequential reactions in the de novo biosynthetic pathway for UDP-N-acetylglucosamine (UDP-GlcNAc). The C-terminal domain catalyzes the transfer of acetyl group from acetyl coenzyme A to glucosamine-1-phosphate (GlcN-1-P) to produce N-acetylglucosamine-1-phosphate (GlcNAc-1-P), which is converted into UDP-GlcNAc by the transfer of uridine 5-monophosphate (from uridine 5-triphosphate), a reaction catalyzed by the N-terminal domain. The chain is Bifunctional protein GlmU from Shouchella clausii (strain KSM-K16) (Alkalihalobacillus clausii).